A 202-amino-acid chain; its full sequence is MPKVGMQPIRRRQLIDATLSTINDVGINDATIAQIARRAGVSAGIISHYFKDKNGLLEATMRDITRQLRDAVAARLRPLAQASTEARLLAIVEGNFDDTQVHSAAMKAWLDFWASSMHQPQLGRLERVSSRRLFSTLAAEFRRELPREQARLAAHGLASLIDGLWLRAALSGQPFNLETARTLTTQFIRQQLAGAAPHEKEE.

The region spanning 8 to 68 is the HTH tetR-type domain; that stretch reads PIRRRQLIDA…ATMRDITRQL (61 aa). The H-T-H motif DNA-binding region spans 31 to 50; it reads TIAQIARRAGVSAGIISHYF.

It participates in amine and polyamine biosynthesis; betaine biosynthesis via choline pathway [regulation]. Functionally, repressor involved in the biosynthesis of the osmoprotectant glycine betaine. It represses transcription of the choline transporter BetT and the genes of BetAB involved in the synthesis of glycine betaine. This is HTH-type transcriptional regulator BetI from Cronobacter sakazakii (strain ATCC BAA-894) (Enterobacter sakazakii).